The sequence spans 243 residues: Protein GrpE (243 aa).

It belongs to the GrpE family. As to quaternary structure, homodimer.

The protein resides in the cytoplasm. In terms of biological role, participates actively in the response to hyperosmotic and heat shock by preventing the aggregation of stress-denatured proteins, in association with DnaK and GrpE. It is the nucleotide exchange factor for DnaK and may function as a thermosensor. Unfolded proteins bind initially to DnaJ; upon interaction with the DnaJ-bound protein, DnaK hydrolyzes its bound ATP, resulting in the formation of a stable complex. GrpE releases ADP from DnaK; ATP binding to DnaK triggers the release of the substrate protein, thus completing the reaction cycle. Several rounds of ATP-dependent interactions between DnaJ, DnaK and GrpE are required for fully efficient folding. The protein is Protein GrpE of Mycoplasma mobile (strain ATCC 43663 / 163K / NCTC 11711) (Mesomycoplasma mobile).